The following is a 409-amino-acid chain: Phospho-N-acetylmuramoyl-pentapeptide-transferase (409 aa).

The next 10 helical transmembrane spans lie at 23–43 (YITF…TIFG), 73–93 (TPTM…LLLA), 95–115 (LNNI…AIGF), 132–152 (GIFK…TLYF), 214–234 (YAWL…SNGA), 247–267 (TSAI…NVIF), 279–299 (SGEM…FLWY), 305–325 (AVFM…VLAI), 331–351 (MLIP…VLQV), and 386–406 (KIVT…IVTL).

Belongs to the glycosyltransferase 4 family. MraY subfamily. Mg(2+) serves as cofactor.

It is found in the cell inner membrane. It catalyses the reaction UDP-N-acetyl-alpha-D-muramoyl-L-alanyl-gamma-D-glutamyl-meso-2,6-diaminopimeloyl-D-alanyl-D-alanine + di-trans,octa-cis-undecaprenyl phosphate = di-trans,octa-cis-undecaprenyl diphospho-N-acetyl-alpha-D-muramoyl-L-alanyl-D-glutamyl-meso-2,6-diaminopimeloyl-D-alanyl-D-alanine + UMP. The protein operates within cell wall biogenesis; peptidoglycan biosynthesis. Catalyzes the initial step of the lipid cycle reactions in the biosynthesis of the cell wall peptidoglycan: transfers peptidoglycan precursor phospho-MurNAc-pentapeptide from UDP-MurNAc-pentapeptide onto the lipid carrier undecaprenyl phosphate, yielding undecaprenyl-pyrophosphoryl-MurNAc-pentapeptide, known as lipid I. This chain is Phospho-N-acetylmuramoyl-pentapeptide-transferase, found in Flavobacterium psychrophilum (strain ATCC 49511 / DSM 21280 / CIP 103535 / JIP02/86).